Here is a 263-residue protein sequence, read N- to C-terminus: Interleukin-33 (263 aa).

Positions 1-17 (MKYSTTKIPPAKMNSSA) are enriched in polar residues. A disordered region spans residues 1 to 28 (MKYSTTKIPPAKMNSSADKALVKSPKLR). The tract at residues 1-65 (MKYSTTKIPP…CYFRKEITKR (65 aa)) is homeodomain-like HTH domain. Positions 62–103 (ITKRYSPRTAEKCRKQCLVFTACHQQLNKDFTSDVPMLQKCF) are interaction with RELA.

The protein belongs to the IL-1 family. Highly divergent. As to quaternary structure, forms a 1:1:1 heterotrimeric complex with its primary high-affinity receptor IL1RL1 and the coreceptor IL1RAP. Interacts with cargo receptor TMED10; the interaction mediates the translocation from the cytoplasm into the ERGIC (endoplasmic reticulum-Golgi intermediate compartment) and thereby secretion. The full-length protein can be released from cells and is able to signal via the IL1RL1/ST2 receptor. However, proteolytic processing by CELA1, CSTG/cathepsin G and ELANE/neutrophil elastase produces C-terminal peptides that are more active than the unprocessed full-length protein. May also be proteolytically processed by calpains. Proteolytic cleavage mediated by apoptotic caspases including CASP3 and CASP7 results in IL33 inactivation. In vitro proteolytic cleavage by CASP1 was reported but could not be confirmed in vivo suggesting that IL33 is probably not a direct substrate for that caspase. As to expression, expressed in cultured umbilical artery smooth muscle cells after stimulation with IL1A and IL1B, and to a lesser extent with IFNG. Expressed in vasospastic cerebral arteries after subarachnoid hemorrhage.

It is found in the nucleus. Its subcellular location is the chromosome. It localises to the cytoplasm. The protein localises to the cytoplasmic vesicle. The protein resides in the secretory vesicle. It is found in the secreted. Its function is as follows. Cytokine that binds to and signals through the IL1RL1/ST2 receptor which in turn activates NF-kappa-B and MAPK signaling pathways in target cells. Involved in the maturation of Th2 cells inducing the secretion of T-helper type 2-associated cytokines. Also involved in activation of mast cells, basophils, eosinophils and natural killer cells. Acts as a chemoattractant for Th2 cells, and may function as an 'alarmin', that amplifies immune responses during tissue injury. Induces rapid UCP2-dependent mitochondrial rewiring that attenuates the generation of reactive oxygen species and preserves the integrity of Krebs cycle required for persistent production of itaconate and subsequent GATA3-dependent differentiation of inflammation-resolving alternatively activated macrophages. Functionally, in quiescent endothelia the uncleaved form is constitutively and abundantly expressed, and acts as a chromatin-associated nuclear factor with transcriptional repressor properties, it may sequester nuclear NF-kappaB/RELA, lowering expression of its targets. This form is rapidely lost upon angiogenic or pro-inflammatory activation. This chain is Interleukin-33 (IL33), found in Canis lupus familiaris (Dog).